Consider the following 447-residue polypeptide: UDP-N-acetylmuramate--L-alanine ligase (447 aa).

115 to 121 (GAHGKTS) contacts ATP.

Belongs to the MurCDEF family.

It localises to the cytoplasm. It carries out the reaction UDP-N-acetyl-alpha-D-muramate + L-alanine + ATP = UDP-N-acetyl-alpha-D-muramoyl-L-alanine + ADP + phosphate + H(+). Its pathway is cell wall biogenesis; peptidoglycan biosynthesis. Cell wall formation. The sequence is that of UDP-N-acetylmuramate--L-alanine ligase from Streptococcus thermophilus (strain CNRZ 1066).